Reading from the N-terminus, the 274-residue chain is 2,3,4,5-tetrahydropyridine-2,6-dicarboxylate N-succinyltransferase (274 aa).

Residues Arg104 and Asp141 each coordinate substrate.

This sequence belongs to the transferase hexapeptide repeat family. In terms of assembly, homotrimer.

It is found in the cytoplasm. The enzyme catalyses (S)-2,3,4,5-tetrahydrodipicolinate + succinyl-CoA + H2O = (S)-2-succinylamino-6-oxoheptanedioate + CoA. It participates in amino-acid biosynthesis; L-lysine biosynthesis via DAP pathway; LL-2,6-diaminopimelate from (S)-tetrahydrodipicolinate (succinylase route): step 1/3. In Shewanella putrefaciens (strain CN-32 / ATCC BAA-453), this protein is 2,3,4,5-tetrahydropyridine-2,6-dicarboxylate N-succinyltransferase.